Here is a 671-residue protein sequence, read N- to C-terminus: RNA polymerase sigma factor RpoD (671 aa).

Disordered stretches follow at residues 1 to 45 (MKKK…SKIK) and 229 to 260 (DDDENSVSDSKKDEDNEEDEENEERKKVVSEK). The segment covering 251–260 (EERKKVVSEK) has biased composition (basic and acidic residues). Residues 436–506 (MAKSNLRLVV…SRAIADQART (71 aa)) are sigma-70 factor domain-2. The Interaction with polymerase core subunit RpoC motif lies at 460–463 (DLIQ). The segment at 515–591 (DTINRINKVM…DKNIVSSIDH (77 aa)) is sigma-70 factor domain-3. The segment at 604 to 658 (VLDQLNEREKAVIRMRFGLLDDESDRTLEEIGKELNVTRERVRQIESSAIKKLRS) is sigma-70 factor domain-4. Residues 631–650 (LEEIGKELNVTRERVRQIES) constitute a DNA-binding region (H-T-H motif).

It belongs to the sigma-70 factor family. RpoD/SigA subfamily. As to quaternary structure, interacts transiently with the RNA polymerase catalytic core.

The protein resides in the cytoplasm. In terms of biological role, sigma factors are initiation factors that promote the attachment of RNA polymerase to specific initiation sites and are then released. This sigma factor is the primary sigma factor during exponential growth. This Helicobacter pylori (strain ATCC 700392 / 26695) (Campylobacter pylori) protein is RNA polymerase sigma factor RpoD.